The primary structure comprises 71 residues: Immune-induced peptide 18 (71 aa).

Residues 1–24 form the signal peptide; it reads MKLIALCCLLLLGLLGFLAAPGVA. Positions 25–26 are excised as a propeptide; the sequence is SP. The tract at residues 26 to 71 is disordered; that stretch reads PSRHTGPGNGSGSGAGSGNPFRSPSSQQRPLYYDAPIGKPSKTMYA. Residues 32–42 are compositionally biased toward gly residues; sequence PGNGSGSGAGS.

As to expression, hemolymph (at protein level).

It localises to the secreted. The protein is Immune-induced peptide 18 (IM18) of Drosophila melanogaster (Fruit fly).